The sequence spans 386 residues: DNA replication and repair protein RecF (386 aa).

ATP is bound at residue 30 to 37; sequence GSNGFGKT.

The protein belongs to the RecF family.

It localises to the cytoplasm. In terms of biological role, the RecF protein is involved in DNA metabolism; it is required for DNA replication and normal SOS inducibility. RecF binds preferentially to single-stranded, linear DNA. It also seems to bind ATP. The chain is DNA replication and repair protein RecF from Mycolicibacterium vanbaalenii (strain DSM 7251 / JCM 13017 / BCRC 16820 / KCTC 9966 / NRRL B-24157 / PYR-1) (Mycobacterium vanbaalenii).